A 635-amino-acid chain; its full sequence is Chaperone protein HtpG (635 aa).

Positions 1 to 343 (MTAEATVETR…SNDLSLNVSR (343 aa)) are a; substrate-binding. The tract at residues 344-560 (EILQQDPNID…EHDMGAQMRR (217 aa)) is b. The segment at 561–635 (LLEAAGQAVP…LNKLLLELSN (75 aa)) is c.

It belongs to the heat shock protein 90 family. As to quaternary structure, homodimer.

Its subcellular location is the cytoplasm. In terms of biological role, molecular chaperone. Has ATPase activity. This chain is Chaperone protein HtpG, found in Saccharophagus degradans (strain 2-40 / ATCC 43961 / DSM 17024).